Here is a 314-residue protein sequence, read N- to C-terminus: uncharacterized protein (314 aa).

The disordered stretch occupies residues 1–70 (MAGNSQRRGA…QGRHKKTDDT (70 aa)). Basic residues predominate over residues 43 to 65 (QRPHHPAGKRAAKAARQAQGRHK). S-adenosyl-L-methionine-binding residues include G265, I285, and L294.

The protein belongs to the class IV-like SAM-binding methyltransferase superfamily. RNA methyltransferase TrmH family.

This is an uncharacterized protein from Mycolicibacterium vanbaalenii (strain DSM 7251 / JCM 13017 / BCRC 16820 / KCTC 9966 / NRRL B-24157 / PYR-1) (Mycobacterium vanbaalenii).